Here is a 377-residue protein sequence, read N- to C-terminus: Succinyl-diaminopimelate desuccinylase (377 aa).

His-66 serves as a coordination point for Zn(2+). Asp-68 is a catalytic residue. Asp-99 contributes to the Zn(2+) binding site. The Proton acceptor role is filled by Glu-133. The Zn(2+) site is built by Glu-134, Glu-162, and His-348.

It belongs to the peptidase M20A family. DapE subfamily. As to quaternary structure, homodimer. It depends on Zn(2+) as a cofactor. Requires Co(2+) as cofactor.

It catalyses the reaction N-succinyl-(2S,6S)-2,6-diaminopimelate + H2O = (2S,6S)-2,6-diaminopimelate + succinate. It functions in the pathway amino-acid biosynthesis; L-lysine biosynthesis via DAP pathway; LL-2,6-diaminopimelate from (S)-tetrahydrodipicolinate (succinylase route): step 3/3. Catalyzes the hydrolysis of N-succinyl-L,L-diaminopimelic acid (SDAP), forming succinate and LL-2,6-diaminopimelate (DAP), an intermediate involved in the bacterial biosynthesis of lysine and meso-diaminopimelic acid, an essential component of bacterial cell walls. This is Succinyl-diaminopimelate desuccinylase from Histophilus somni (strain 129Pt) (Haemophilus somnus).